The sequence spans 231 residues: Orotidine 5'-phosphate decarboxylase (231 aa).

Substrate contacts are provided by residues Asp-12, Lys-34, 61 to 70, Thr-120, Arg-181, Gln-190, Gly-210, and Arg-211; that span reads DLKFHDIPNT. Lys-63 serves as the catalytic Proton donor.

This sequence belongs to the OMP decarboxylase family. Type 1 subfamily. As to quaternary structure, homodimer.

It catalyses the reaction orotidine 5'-phosphate + H(+) = UMP + CO2. Its pathway is pyrimidine metabolism; UMP biosynthesis via de novo pathway; UMP from orotate: step 2/2. Functionally, catalyzes the decarboxylation of orotidine 5'-monophosphate (OMP) to uridine 5'-monophosphate (UMP). This is Orotidine 5'-phosphate decarboxylase from Alcanivorax borkumensis (strain ATCC 700651 / DSM 11573 / NCIMB 13689 / SK2).